A 176-amino-acid polypeptide reads, in one-letter code: MFHATTIVAVRKGGKVAVAGDGQVTFGQNTIIKKGARKIRRLYKDSVLAGFAGSVADAITLFEKFEGKLEEYHGNLQRAAVELAKDWRTDRILRRLEALLIVADKENLLIISGSGEVIEPDDGVAAIGSGGPYALAAARALVRHTSMEAEDIAREALAVAAEICVYTNDNIIVERL.

Threonine 5 is a catalytic residue. 3 residues coordinate Na(+): alanine 161, cysteine 164, and threonine 167.

The protein belongs to the peptidase T1B family. HslV subfamily. A double ring-shaped homohexamer of HslV is capped on each side by a ring-shaped HslU homohexamer. The assembly of the HslU/HslV complex is dependent on binding of ATP.

Its subcellular location is the cytoplasm. The catalysed reaction is ATP-dependent cleavage of peptide bonds with broad specificity.. Its activity is regulated as follows. Allosterically activated by HslU binding. Protease subunit of a proteasome-like degradation complex believed to be a general protein degrading machinery. The protein is ATP-dependent protease subunit HslV of Pelotomaculum thermopropionicum (strain DSM 13744 / JCM 10971 / SI).